Reading from the N-terminus, the 350-residue chain is Phosphotriesterase-related protein (350 aa).

The a divalent metal cation site is built by His-22, His-24, Glu-169, His-201, His-230, and Asp-298.

It belongs to the metallo-dependent hydrolases superfamily. Phosphotriesterase family. It depends on a divalent metal cation as a cofactor.

The polypeptide is Phosphotriesterase-related protein (Drosophila persimilis (Fruit fly)).